The sequence spans 95 residues: Aspartyl/glutamyl-tRNA(Asn/Gln) amidotransferase subunit C (95 aa).

The protein belongs to the GatC family. As to quaternary structure, heterotrimer of A, B and C subunits.

The catalysed reaction is L-glutamyl-tRNA(Gln) + L-glutamine + ATP + H2O = L-glutaminyl-tRNA(Gln) + L-glutamate + ADP + phosphate + H(+). It catalyses the reaction L-aspartyl-tRNA(Asn) + L-glutamine + ATP + H2O = L-asparaginyl-tRNA(Asn) + L-glutamate + ADP + phosphate + 2 H(+). In terms of biological role, allows the formation of correctly charged Asn-tRNA(Asn) or Gln-tRNA(Gln) through the transamidation of misacylated Asp-tRNA(Asn) or Glu-tRNA(Gln) in organisms which lack either or both of asparaginyl-tRNA or glutaminyl-tRNA synthetases. The reaction takes place in the presence of glutamine and ATP through an activated phospho-Asp-tRNA(Asn) or phospho-Glu-tRNA(Gln). The sequence is that of Aspartyl/glutamyl-tRNA(Asn/Gln) amidotransferase subunit C from Syntrophotalea carbinolica (strain DSM 2380 / NBRC 103641 / GraBd1) (Pelobacter carbinolicus).